The primary structure comprises 460 residues: Transcriptional regulatory protein UME1 (460 aa).

The short motif at 14-22 is the NEE-box element; it reads NEEFKIWKK. 4 WD repeats span residues 233-271, 276-316, 339-379, and 411-451; these read PGIKNIQEIKFLNNQIFATCSDDGIIRFWGNEIGKKPLW, SLDG…ALGD, FYSE…AIYN, and GENN…VLDG.

As to quaternary structure, component of the RPD3C(L) complex composed of at least ASH1, CTI6, DEP1, PHO23, RPD3, RXT2, RXT3, SAP30, SDS3, SIN3, UME1 and UME6. Component of the RPD3C(S) complex composed of at least EAF3, RCO1, RPD3, SIN3, and UME1. Interacts with RPD3.

It localises to the cytoplasm. The protein resides in the nucleus. Functionally, catalytic component of the RPD3 histone deacetylase complexes RPD3C(L) and RPD3C(S) responsible for the deacetylation of lysine residues on the N-terminal part of the core histones (H2A, H2B, H3 and H4). Histone deacetylation gives a tag for epigenetic repression and plays an important role in transcriptional regulation, cell cycle progression and developmental events. In Saccharomyces cerevisiae (strain ATCC 204508 / S288c) (Baker's yeast), this protein is Transcriptional regulatory protein UME1 (UME1).